We begin with the raw amino-acid sequence, 101 residues long: Anti-lipopolysaccharide factor (101 aa).

A disulfide bridge links C31 with C52.

Its function is as follows. Binds tightly to LPS and thus specifically inhibits the LPS-mediated activation of the hemolymph coagulation. It has a strong antibacterial effect especially on the growth of Gram-negative bacteria. The protein is Anti-lipopolysaccharide factor of Limulus polyphemus (Atlantic horseshoe crab).